A 329-amino-acid polypeptide reads, in one-letter code: Isoaspartyl peptidase/L-asparaginase (329 aa).

Threonine 173 functions as the Nucleophile in the catalytic mechanism. Substrate contacts are provided by residues 201–204 and 222–225; these read RVSD and TGVG.

This sequence belongs to the Ntn-hydrolase family. In terms of assembly, heterotetramer of two alpha and two beta chains arranged as a dimer of alpha/beta heterodimers. Post-translationally, cleaved into an alpha and beta chain by autocatalysis; this activates the enzyme. The N-terminal residue of the beta subunit is responsible for the nucleophile hydrolase activity.

The catalysed reaction is Cleavage of a beta-linked Asp residue from the N-terminus of a polypeptide.. Degrades proteins damaged by L-isoaspartyl residue formation (also known as beta-Asp residues). Probably performs the final step in the degradation of the reserve polymer cyanophycin (depolymerizes the building block L-beta-Asp-Arg). Also has L-asparaginase activity. This chain is Isoaspartyl peptidase/L-asparaginase, found in Synechocystis sp. (strain ATCC 27184 / PCC 6803 / Kazusa).